A 249-amino-acid polypeptide reads, in one-letter code: Interleukin-1 receptor-associated kinase 1-binding protein 1 homolog (249 aa).

Belongs to the IRAK1BP1 family.

It is found in the cytoplasm. It localises to the nucleus. Functionally, may be part of a signaling pathway that leads to NF-kappa-B activation. The protein is Interleukin-1 receptor-associated kinase 1-binding protein 1 homolog (irak1bp1) of Danio rerio (Zebrafish).